A 67-amino-acid polypeptide reads, in one-letter code: Medusin-H1 (67 aa).

Positions 1–22 are cleaved as a signal peptide; sequence MDFLKKSLFLVLFLGFFSLSIC. The propeptide occupies 23-48; it reads EEEKRETEEKENEQEDDREERREEKR. The tract at residues 24–46 is disordered; the sequence is EEKRETEEKENEQEDDREERREE. The segment covering 31 to 40 has biased composition (acidic residues); it reads EKENEQEDDR. Leucine amide is present on Leu-66.

This sequence belongs to the frog skin active peptide (FSAP) family. Medusin subfamily. Expressed by the skin glands.

The protein localises to the secreted. Its function is as follows. Antimicrobial peptide with activity against Gram-positive bacteria (S.aureus, MIC=32 mg/L) and fungi (C.albicans, MIC=128 mg/L). Shows weak hemolytic activity. This chain is Medusin-H1, found in Pithecopus hypochondrialis (Orange-legged leaf frog).